We begin with the raw amino-acid sequence, 2555 residues long: Plipastatin synthase subunit C (2555 aa).

The segment at 7-306 (IQDIYPLSFM…NTIPIRAQSD (300 aa)) is condensation 1. The segment at 491 to 894 (TYAELDMYAS…SIEGVREAAV (404 aa)) is adenylation 1. The Carrier 1 domain maps to 967 to 1042 (APRNVTEMKL…GLATVIREGT (76 aa)). Residue Ser-1002 is modified to O-(pantetheine 4'-phosphoryl)serine. The interval 1054–1344 (KQETYPVSSA…NTLALRTRPE (291 aa)) is condensation 2. The tract at residues 1532–1927 (TYEDLNSWAN…QIDGVKEAAV (396 aa)) is adenylation 2. The Carrier 2 domain occupies 2003-2077 (PPRNELEEQL…DLSPFIRKSE (75 aa)). Residue Ser-2038 is modified to O-(pantetheine 4'-phosphoryl)serine. The tract at residues 2085-2548 (IQGDVPWTPV…SLTAEDLDSI (464 aa)) is epimerization 3.

It belongs to the ATP-dependent AMP-binding enzyme family. The cofactor is pantetheine 4'-phosphate.

In terms of biological role, this protein is a multifunctional enzyme, able to activate and polymerize the amino acids Glu and Ala/Val as part of the biosynthesis of the lipopeptide antibiotic plipastatin. The Ala/Val residue is further epimerized to the D-isomer form. The activation sites for these amino acids consist of individual domains. The protein is Plipastatin synthase subunit C (ppsC) of Bacillus subtilis (strain 168).